A 468-amino-acid chain; its full sequence is Argininosuccinate lyase (468 aa).

The protein belongs to the lyase 1 family. Argininosuccinate lyase subfamily.

The protein localises to the cytoplasm. The catalysed reaction is 2-(N(omega)-L-arginino)succinate = fumarate + L-arginine. It participates in amino-acid biosynthesis; L-arginine biosynthesis; L-arginine from L-ornithine and carbamoyl phosphate: step 3/3. The chain is Argininosuccinate lyase from Gloeobacter violaceus (strain ATCC 29082 / PCC 7421).